The sequence spans 127 residues: S-adenosylmethionine decarboxylase proenzyme 2 (127 aa).

Serine 63 (schiff-base intermediate with substrate; via pyruvic acid) is an active-site residue. Pyruvic acid (Ser); by autocatalysis is present on serine 63. Residue histidine 68 is the Proton acceptor; for processing activity of the active site. Cysteine 83 acts as the Proton donor; for catalytic activity in catalysis.

It belongs to the prokaryotic AdoMetDC family. Type 1 subfamily. Heterotetramer of two alpha and two beta chains arranged as a dimer of alpha/beta heterodimers. Requires pyruvate as cofactor. Post-translationally, is synthesized initially as an inactive proenzyme. Formation of the active enzyme involves a self-maturation process in which the active site pyruvoyl group is generated from an internal serine residue via an autocatalytic post-translational modification. Two non-identical subunits are generated from the proenzyme in this reaction, and the pyruvate is formed at the N-terminus of the alpha chain, which is derived from the carboxyl end of the proenzyme. The post-translation cleavage follows an unusual pathway, termed non-hydrolytic serinolysis, in which the side chain hydroxyl group of the serine supplies its oxygen atom to form the C-terminus of the beta chain, while the remainder of the serine residue undergoes an oxidative deamination to produce ammonia and the pyruvoyl group blocking the N-terminus of the alpha chain.

The catalysed reaction is S-adenosyl-L-methionine + H(+) = S-adenosyl 3-(methylsulfanyl)propylamine + CO2. Its pathway is amine and polyamine biosynthesis; S-adenosylmethioninamine biosynthesis; S-adenosylmethioninamine from S-adenosyl-L-methionine: step 1/1. Catalyzes the decarboxylation of S-adenosylmethionine to S-adenosylmethioninamine (dcAdoMet), the propylamine donor required for the synthesis of the polyamines spermine and spermidine from the diamine putrescine. The polypeptide is S-adenosylmethionine decarboxylase proenzyme 2 (Halalkalibacterium halodurans (strain ATCC BAA-125 / DSM 18197 / FERM 7344 / JCM 9153 / C-125) (Bacillus halodurans)).